The following is a 287-amino-acid chain: Protease HtpX (287 aa).

The next 2 helical transmembrane spans lie at 4-24 (IFLL…VMSI) and 33-53 (GGLL…SLAI). Residue H139 participates in Zn(2+) binding. E140 is a catalytic residue. H143 contributes to the Zn(2+) binding site. 2 helical membrane passes run 154–174 (LIQG…AGII) and 195–215 (AVVF…VAYF). E220 lines the Zn(2+) pocket.

It belongs to the peptidase M48B family. Zn(2+) serves as cofactor.

The protein localises to the cell inner membrane. This Shewanella sp. (strain ANA-3) protein is Protease HtpX.